A 329-amino-acid chain; its full sequence is Beta-ribofuranosylphenol 5'-phosphate synthase (329 aa).

The protein belongs to the beta-RFA-P synthase family. Homodimer. It depends on Mg(2+) as a cofactor.

It catalyses the reaction 5-phospho-alpha-D-ribose 1-diphosphate + 4-hydroxybenzoate + H(+) = 4-(beta-D-ribofuranosyl)phenol 5'-phosphate + CO2 + diphosphate. The enzyme catalyses 4-aminobenzoate + 5-phospho-alpha-D-ribose 1-diphosphate + H(+) = 4-(beta-D-ribofuranosyl)aminobenzene 5'-phosphate + CO2 + diphosphate. Its pathway is cofactor biosynthesis; 5,6,7,8-tetrahydromethanopterin biosynthesis. In terms of biological role, catalyzes the condensation of 4-hydroxybenzoate (HB) with 5-phospho-alpha-D-ribose 1-diphosphate (PRPP) to produce beta-ribofuranosylphenol 5'-phosphate (beta-RFH-P). Also catalyzes the condensation of 4-aminobenzoate (pABA) with PRPP to produce beta-ribofuranosylaminobenzene 5'-phosphate (beta-RFA-P). Only 4-hydroxybenzoate is known to be biosynthesized by methanogenic archaea, but 4-aminobenzoate can be used as substrate by growing methanogens when it is present in the growth medium. The chain is Beta-ribofuranosylphenol 5'-phosphate synthase from Methanothermobacter thermautotrophicus (strain ATCC 29096 / DSM 1053 / JCM 10044 / NBRC 100330 / Delta H) (Methanobacterium thermoautotrophicum).